The primary structure comprises 519 residues: NADH dehydrogenase (519 aa).

Positions 1–183 (MVLEPQIKSQ…YLNGESFTSG (183 aa)) are membrane-binding. Positions 184-519 (RMTVEEILAQ…TTPAESAAAK (336 aa)) are catalytic. 210–241 (DVLVVGGGPAGASSAIYAARKGIRTGIVADRF) contributes to the FAD binding site. Cys337 and Cys340 form a disulfide bridge. 349–379 (DVAVIGGGNSGVEAAIDLAGIVNHVTVLEFM) lines the NAD(+) pocket. 469–479 (TNVPGVFAAGD) contacts FAD.

This sequence belongs to the class-II pyridine nucleotide-disulfide oxidoreductase family. Homodimer. Requires FAD as cofactor.

It localises to the cell membrane. It catalyses the reaction a ubiquinone + NADH + 5 H(+)(in) = a ubiquinol + NAD(+) + 4 H(+)(out). Functionally, transfer of electrons from NADH to the respiratory chain. The immediate electron acceptor for the enzyme is believed to be ubiquinone. In Ferdinandcohnia aciditolerans (strain JCM 32973 / CCTCC AB 2017280 / YN-1) (Bacillus aciditolerans), this protein is NADH dehydrogenase (ahpF).